We begin with the raw amino-acid sequence, 208 residues long: Germin-like protein subfamily 3 member 1 (208 aa).

Positions 1-18 (MLRTIFLLSLLFALSNAS) are cleaved as a signal peptide. Cys-23 and Cys-38 are oxidised to a cystine. The Cupin type-1 domain occupies 52–198 (SGLGTPGNTT…TTFLDATTVK (147 aa)). Asn-59 is a glycosylation site (N-linked (GlcNAc...) asparagine). Mn(2+) is bound by residues His-100, His-102, Glu-107, and His-146.

This sequence belongs to the germin family. As to quaternary structure, may not form oligomer. Expressed during germination, and also in green shoots, etiolated seedlings and whole seedlings.

It is found in the secreted. Its subcellular location is the extracellular space. The protein resides in the apoplast. Functionally, may play a role in plant defense. Probably has no oxalate oxidase activity even if the active site is conserved. The polypeptide is Germin-like protein subfamily 3 member 1 (GLP1) (Arabidopsis thaliana (Mouse-ear cress)).